Here is a 224-residue protein sequence, read N- to C-terminus: BTB/POZ domain-containing protein At5g48510 (224 aa).

A BTB domain is found at 24–98; that stretch reads VDVMLKAKNS…ICSDGSMLSA (75 aa).

In terms of assembly, interacts with CUL3A.

It participates in protein modification; protein ubiquitination. May act as a substrate-specific adapter of an E3 ubiquitin-protein ligase complex (CUL3-RBX1-BTB) which mediates the ubiquitination and subsequent proteasomal degradation of target proteins. This chain is BTB/POZ domain-containing protein At5g48510, found in Arabidopsis thaliana (Mouse-ear cress).